The following is a 205-amino-acid chain: Adenylate kinase (205 aa).

11–16 contacts ATP; the sequence is GSGKGT. The segment at 31–60 is NMP; sequence STGDIFRHNVKSMTPLGVEAKRYIDNGDFV. AMP-binding positions include Thr32, Arg37, 58-60, 86-89, and Gln93; these read DFV and GYPR. Positions 127 to 137 are LID; the sequence is KRAEIEGRADD. Arg128 is an ATP binding site. 2 residues coordinate AMP: Arg134 and Arg145. Gly173 contributes to the ATP binding site.

The protein belongs to the adenylate kinase family. In terms of assembly, monomer.

It is found in the cytoplasm. It catalyses the reaction AMP + ATP = 2 ADP. It functions in the pathway purine metabolism; AMP biosynthesis via salvage pathway; AMP from ADP: step 1/1. Its function is as follows. Catalyzes the reversible transfer of the terminal phosphate group between ATP and AMP. Plays an important role in cellular energy homeostasis and in adenine nucleotide metabolism. The chain is Adenylate kinase from Micrococcus luteus (strain ATCC 4698 / DSM 20030 / JCM 1464 / CCM 169 / CCUG 5858 / IAM 1056 / NBRC 3333 / NCIMB 9278 / NCTC 2665 / VKM Ac-2230) (Micrococcus lysodeikticus).